We begin with the raw amino-acid sequence, 285 residues long: 2-dehydro-3-deoxyphosphooctonate aldolase (285 aa).

The protein belongs to the KdsA family.

Its subcellular location is the cytoplasm. The catalysed reaction is D-arabinose 5-phosphate + phosphoenolpyruvate + H2O = 3-deoxy-alpha-D-manno-2-octulosonate-8-phosphate + phosphate. It functions in the pathway carbohydrate biosynthesis; 3-deoxy-D-manno-octulosonate biosynthesis; 3-deoxy-D-manno-octulosonate from D-ribulose 5-phosphate: step 2/3. The protein operates within bacterial outer membrane biogenesis; lipopolysaccharide biosynthesis. The chain is 2-dehydro-3-deoxyphosphooctonate aldolase from Bordetella parapertussis (strain 12822 / ATCC BAA-587 / NCTC 13253).